Consider the following 429-residue polypeptide: Enolase (429 aa).

(2R)-2-phosphoglycerate is bound at residue Q167. E209 functions as the Proton donor in the catalytic mechanism. Mg(2+) is bound by residues D246, E289, and D316. (2R)-2-phosphoglycerate-binding residues include K341, R370, S371, and K392. The Proton acceptor role is filled by K341.

Belongs to the enolase family. Component of the RNA degradosome, a multiprotein complex involved in RNA processing and mRNA degradation. Mg(2+) is required as a cofactor.

It is found in the cytoplasm. The protein localises to the secreted. It localises to the cell surface. The catalysed reaction is (2R)-2-phosphoglycerate = phosphoenolpyruvate + H2O. Its pathway is carbohydrate degradation; glycolysis; pyruvate from D-glyceraldehyde 3-phosphate: step 4/5. In terms of biological role, catalyzes the reversible conversion of 2-phosphoglycerate (2-PG) into phosphoenolpyruvate (PEP). It is essential for the degradation of carbohydrates via glycolysis. This is Enolase from Cellvibrio japonicus (strain Ueda107) (Pseudomonas fluorescens subsp. cellulosa).